Reading from the N-terminus, the 391-residue chain is Elongation factor Tu (391 aa).

Positions 10–201 (KPHVNIGTIG…AVDSYIPTPE (192 aa)) constitute a tr-type G domain. Residues 19–26 (GHVDHGKT) form a G1 region. 19–26 (GHVDHGKT) is a GTP binding site. Thr-26 provides a ligand contact to Mg(2+). The tract at residues 55-59 (GITIS) is G2. Positions 76–79 (DCPG) are G3. Residues 76-80 (DCPGH) and 131-134 (NKCD) each bind GTP. A G4 region spans residues 131–134 (NKCD). A G5 region spans residues 169–171 (SAL).

The protein belongs to the TRAFAC class translation factor GTPase superfamily. Classic translation factor GTPase family. EF-Tu/EF-1A subfamily. In terms of assembly, monomer.

It is found in the cytoplasm. The enzyme catalyses GTP + H2O = GDP + phosphate + H(+). GTP hydrolase that promotes the GTP-dependent binding of aminoacyl-tRNA to the A-site of ribosomes during protein biosynthesis. This Brucella canis (strain ATCC 23365 / NCTC 10854 / RM-666) protein is Elongation factor Tu.